A 217-amino-acid chain; its full sequence is Probable transaldolase (217 aa).

Lysine 84 functions as the Schiff-base intermediate with substrate in the catalytic mechanism.

The protein belongs to the transaldolase family. Type 3B subfamily.

It is found in the cytoplasm. It catalyses the reaction D-sedoheptulose 7-phosphate + D-glyceraldehyde 3-phosphate = D-erythrose 4-phosphate + beta-D-fructose 6-phosphate. It functions in the pathway carbohydrate degradation; pentose phosphate pathway; D-glyceraldehyde 3-phosphate and beta-D-fructose 6-phosphate from D-ribose 5-phosphate and D-xylulose 5-phosphate (non-oxidative stage): step 2/3. Its function is as follows. Transaldolase is important for the balance of metabolites in the pentose-phosphate pathway. The polypeptide is Probable transaldolase (Roseiflexus sp. (strain RS-1)).